The primary structure comprises 668 residues: Calpain-13 (668 aa).

The Calpain catalytic domain maps to 34–331 (LFIDDTFPAE…FSCLYICSQF (298 aa)). Residues Cys-93, His-249, and Asn-273 contribute to the active site. EF-hand domains lie at 537–572 (FSLDQCQSIMALMDLKVNGRLDREEFARLQSRLIHC) and 635–668 (IRLETMSKAFRNLSKDGKSIYLTEMEWMKLVMYS).

This sequence belongs to the peptidase C2 family.

Its function is as follows. Probable non-lysosomal thiol-protease. The polypeptide is Calpain-13 (Capn13) (Rattus norvegicus (Rat)).